We begin with the raw amino-acid sequence, 147 residues long: Lipoprotein YfjS (147 aa).

The signal sequence occupies residues 1–20 (MKRKTLPLLALVATSLFLSA). The N-palmitoyl cysteine moiety is linked to residue Cys-21. A lipid anchor (S-diacylglycerol cysteine) is attached at Cys-21.

To E.coli YafY.

It localises to the cell inner membrane. Functionally, does not induce degP when overexpressed unless it is mutated to resemble YafY. This Escherichia coli (strain K12) protein is Lipoprotein YfjS (yfjS).